The sequence spans 246 residues: Acetoacetate decarboxylase (246 aa).

The active-site Schiff-base intermediate with acetoacetate is Lys-116.

The protein belongs to the ADC family.

It carries out the reaction acetoacetate + H(+) = acetone + CO2. Functionally, catalyzes the conversion of acetoacetate to acetone and carbon dioxide. The sequence is that of Acetoacetate decarboxylase from Bordetella avium (strain 197N).